Here is an 833-residue protein sequence, read N- to C-terminus: MHQLFRLVLGQKDLSKAGDLFSLDDAEIEDSLTEALEQIKVISSSLDYQTNNNDQAVVEICITRITTAIRETESIEKHARALVGLWDSCLEHNLRPAGKDEDTPHAKIASDIMSCILQNYNRTPVMVLAVPIAVKFLHRGSKELCRNMSNYLSLAAITKADLLADHTEGIIKSILQGNAMLLRVLPAVYEKQPQPINRHLAELLALMSQLEQTEQYHLLRLLHVAAKRKDVEVVQKCVPFLIRNLKDSTYNDIILNILIEIAGHEPLALNSFLPMLKEIAEQFPYLTGQMARIFGAVGHVDEERARSCLRYLVSQLANMEHPFHHILLLEIKSITDAFSSILGPHSRDIFRMSNSFTNIAKLLSRQLENSKADSSRRKTSTEVSIPEKLRELNSMEPESEDHEKLQVKIQAFEDKINAESNTPGSGRRYSLDHISKEERKSIRFSRSRSLALNTVLTNGVSVEDNEVEEKAGMHASISLSQIDPLSHGIGKLPFKTDTHGSPLRNSSASHPSIIHTEPETMPETFKENIQEEILEAATSPIEYQDKLYLHLRENLSKVKAYALEIAKKVPIPDQCTIEDTMRSCVAKLFFTCSLKGHYCLYSKSSFILVSQAPQPWIQVMFLSQQSLFPEPLSIQSGSVQFLKALWEKTQDTGAHSFEVAMTESTFPQQKDLEQLQLHLEEVRFFDVFGFSETAGAWQCFMCNNPEKATVVNQDGQPLIEGKLKEKQVRWKFIKRWKTHYFTLAGNQLLFQKGKSKDDPDDSPIELSKVQSVKAVAKKRRDRSLPRAFEIFTDSKTYVFKAKDEKNAEEWLQCINVALAQAKERESREVTTYL.

Interaction with TGFBR1 stretches follow at residues 201–319 (AELL…LANM) and 663–833 (ESTF…TTYL). The PH domain occupies 716-819 (QPLIEGKLKE…WLQCINVALA (104 aa)).

It belongs to the MELT/VEPH family. Interacts with TGFBR1. As to expression, specifically expressed in kidney and eye. In the eye, expressed in retinal pigmented epithelium but not in the neural retina.

Its subcellular location is the cell membrane. Functionally, interacts with TGF-beta receptor type-1 (TGFBR1) and inhibits dissociation of activated SMAD2 from TGFBR1, impeding its nuclear accumulation and resulting in impaired TGF-beta signaling. May also affect FOXO, Hippo and Wnt signaling. In Mus musculus (Mouse), this protein is Ventricular zone-expressed PH domain-containing protein 1 (Veph1).